The primary structure comprises 255 residues: UPF0246 protein CC_3385 (255 aa).

It belongs to the UPF0246 family.

The chain is UPF0246 protein CC_3385 from Caulobacter vibrioides (strain ATCC 19089 / CIP 103742 / CB 15) (Caulobacter crescentus).